Here is a 104-residue protein sequence, read N- to C-terminus: Thioredoxin 1 (104 aa).

Residues 2–104 (VKIVTSQAEF…LKQLIEKYAA (103 aa)) enclose the Thioredoxin domain. Catalysis depends on nucleophile residues C30 and C33. Cysteines 30 and 33 form a disulfide.

It belongs to the thioredoxin family. In terms of processing, the disulfide bond between Cys-30 and Cys-33 acts as a redox-active center and is reduced by thioredoxin reductase TRXR.

The protein resides in the cytoplasm. Functionally, participates in various redox reactions through the reversible oxidation of its active center dithiol to a disulfide and catalyzes dithiol-disulfide exchange reactions. By modifying the redox status of targeted proteins, induces changes in their structure and activity. Reduces oxidized glutathione (GSSG), thereby acting as a backup for the glutathione redox system. Reduces nitroglutathione (GSNO), a compound involved in the transport of nitric oxide (NO). Also reduces oxidative stress by detoxifying hydrogen peroxide, tert-butyl hydroperoxide and cumene hydroperoxide. Activates ornithine aminotransferase OAT by reducing a disulfide bond in the substrate binding loop, thereby enhancing the affinity of OAT for its substrates. May reduce S-adenosyl-L-homocysteine hydrolase SAHH. This chain is Thioredoxin 1, found in Plasmodium falciparum (isolate 3D7).